The sequence spans 329 residues: Ankyrin repeat and SOCS box protein 5 (329 aa).

ANK repeat units lie at residues 69 to 98 (ADRSPLHEAASQGRLLALRTLLSQGYNVNA), 102 to 131 (DHVTPLHEACLGDHVACARTLLQAGANVNA), 135 to 164 (DGVTPLFNACSQGSTSCTELLLEYGAKPQL), 167 to 196 (CLPSPTHEAASKGHHECLEILISWGVDVDQ), 200 to 229 (HLGTPLYVACMSQQFHCVRKLLYAGADVQK), and 232 to 261 (YWDTPLHAAAQQSCTEIVNLLLEFGADINA). Positions 278–329 (LVERLLLQHEATPSSLCQLCRLCIRNYIGRPRLHLIPQLQLPTLLQNFLQYR) constitute an SOCS box domain.

This sequence belongs to the ankyrin SOCS box (ASB) family.

The protein operates within protein modification; protein ubiquitination. May be a substrate-recognition component of a SCF-like ECS (Elongin-Cullin-SOCS-box protein) E3 ubiquitin-protein ligase complex which mediates the ubiquitination and subsequent proteasomal degradation of target proteins. May play a role in the initiation of arteriogenesis. In Bos taurus (Bovine), this protein is Ankyrin repeat and SOCS box protein 5 (ASB5).